We begin with the raw amino-acid sequence, 529 residues long: MSVKWTSVILLIQLSFYFSSGSCGKVLVWAAEYSHWMNMKTILEELVQRGHEVTALASSASILFDPNNSSALKIEVFPTSLPKPEFENIVTQEIKRWIELPKDTFWLYFSQMQEIMWKFGDIFRNFCKDVVSNKKLMKKLQESRFDVVFADPIFPCSELLAELFNIPLVYSLRFTPGYVFEKHCGGFLFPPSYVPVVMSELSDQMTFMERVKNMIYMLYFDFCFQIYDMKKWDQFYTEVLGRHTTLSEIMGKADIWLIRNSWNFQFPHPLLPNVDFIGGLLCKPAKPLPKEMEEFVQSSGENGVVVFTLGSMITNMKEERANVIASALAQIPQKVLWRFDGNKPDTLGVNTRLYKWIPQNDLLGHPKTKAFITHGGANGIYEAIYHGVPMVGIPLFADQPDNIAHMKTRGAAVQLDFDTMSSTDLVNALKTVINDPLYKENVMKLSRIQRDQPVKPLDRAVFWIEFVMRHKGAKHLRPAAHDLTWFQYHSFDVIGFLLACVATVIFIIMKCCLFCFWKFARKGKKGKSD.

Positions 1–24 (MSVKWTSVILLIQLSFYFSSGSCG) are cleaved as a signal peptide. Residues Asn-67 and Asn-68 are each glycosylated (N-linked (GlcNAc...) asparagine). Residues 494 to 514 (IGFLLACVATVIFIIMKCCLF) form a helical membrane-spanning segment.

It belongs to the UDP-glycosyltransferase family. In terms of tissue distribution, expressed in several tissues, including the prostate, mammary gland, epididymis, testis and ovary.

The protein localises to the microsome membrane. It localises to the endoplasmic reticulum membrane. The enzyme catalyses glucuronate acceptor + UDP-alpha-D-glucuronate = acceptor beta-D-glucuronoside + UDP + H(+). In terms of biological role, UDPGTs are of major importance in the conjugation and subsequent elimination of potentially toxic xenobiotics and endogenous compounds. This isozyme has glucuronidating capacity on 6 steroids and the bile acid, hyodeoxycholic acid. May potentially play an important role in estrogen and androgen catabolism in peripheral steroid target tissues. In Macaca fascicularis (Crab-eating macaque), this protein is UDP-glucuronosyltransferase 2B23 (UGT2B23).